A 249-amino-acid chain; its full sequence is ATP synthase subunit a (249 aa).

6 consecutive transmembrane segments (helical) span residues serine 30–glycine 50, phenylalanine 84–isoleucine 104, leucine 114–tyrosine 134, valine 143–isoleucine 163, phenylalanine 193–alanine 213, and isoleucine 220–tyrosine 240.

It belongs to the ATPase A chain family. In terms of assembly, F-type ATPases have 2 components, CF(1) - the catalytic core - and CF(0) - the membrane proton channel. CF(1) has five subunits: alpha(3), beta(3), gamma(1), delta(1), epsilon(1). CF(0) has three main subunits: a(1), b(2) and c(9-12). The alpha and beta chains form an alternating ring which encloses part of the gamma chain. CF(1) is attached to CF(0) by a central stalk formed by the gamma and epsilon chains, while a peripheral stalk is formed by the delta and b chains.

The protein localises to the cell inner membrane. In terms of biological role, key component of the proton channel; it plays a direct role in the translocation of protons across the membrane. This chain is ATP synthase subunit a, found in Afipia carboxidovorans (strain ATCC 49405 / DSM 1227 / KCTC 32145 / OM5) (Oligotropha carboxidovorans).